A 306-amino-acid polypeptide reads, in one-letter code: Aspartate carbamoyltransferase catalytic subunit (306 aa).

The carbamoyl phosphate site is built by Arg54 and Thr55. Lys83 lines the L-aspartate pocket. Carbamoyl phosphate-binding residues include Arg104, His132, and Gln135. L-aspartate contacts are provided by Arg165 and Arg227. Carbamoyl phosphate-binding residues include Leu266 and Pro267.

It belongs to the aspartate/ornithine carbamoyltransferase superfamily. ATCase family. In terms of assembly, heterododecamer (2C3:3R2) of six catalytic PyrB chains organized as two trimers (C3), and six regulatory PyrI chains organized as three dimers (R2).

It carries out the reaction carbamoyl phosphate + L-aspartate = N-carbamoyl-L-aspartate + phosphate + H(+). It functions in the pathway pyrimidine metabolism; UMP biosynthesis via de novo pathway; (S)-dihydroorotate from bicarbonate: step 2/3. Functionally, catalyzes the condensation of carbamoyl phosphate and aspartate to form carbamoyl aspartate and inorganic phosphate, the committed step in the de novo pyrimidine nucleotide biosynthesis pathway. In Clostridium kluyveri (strain NBRC 12016), this protein is Aspartate carbamoyltransferase catalytic subunit.